We begin with the raw amino-acid sequence, 257 residues long: GTP cyclohydrolase FolE2 (257 aa).

Belongs to the GTP cyclohydrolase IV family.

The enzyme catalyses GTP + H2O = 7,8-dihydroneopterin 3'-triphosphate + formate + H(+). It participates in cofactor biosynthesis; 7,8-dihydroneopterin triphosphate biosynthesis; 7,8-dihydroneopterin triphosphate from GTP: step 1/1. In terms of biological role, converts GTP to 7,8-dihydroneopterin triphosphate. The protein is GTP cyclohydrolase FolE2 of Dictyoglomus turgidum (strain DSM 6724 / Z-1310).